The sequence spans 438 residues: Trigger factor (438 aa).

A PPIase FKBP-type domain is found at 160–231; it reads SDQVTIEEQG…IMDVKTKQLQ (72 aa). Positions 407 to 438 are disordered; that stretch reads AQLSGPQAETVAADQGEQQAEGQEESAEKSEE. The span at 418 to 427 shows a compositional bias: low complexity; sequence AADQGEQQAE.

Belongs to the FKBP-type PPIase family. Tig subfamily.

It localises to the cytoplasm. The enzyme catalyses [protein]-peptidylproline (omega=180) = [protein]-peptidylproline (omega=0). Involved in protein export. Acts as a chaperone by maintaining the newly synthesized protein in an open conformation. Functions as a peptidyl-prolyl cis-trans isomerase. This Deinococcus deserti (strain DSM 17065 / CIP 109153 / LMG 22923 / VCD115) protein is Trigger factor.